Consider the following 856-residue polypeptide: DNA mismatch repair protein MutS (856 aa).

Residue 618 to 625 (GPNMGGKS) coordinates ATP.

The protein belongs to the DNA mismatch repair MutS family.

Functionally, this protein is involved in the repair of mismatches in DNA. It is possible that it carries out the mismatch recognition step. This protein has a weak ATPase activity. This Shewanella baltica (strain OS195) protein is DNA mismatch repair protein MutS.